The primary structure comprises 284 residues: D-tagatose-1,6-bisphosphate aldolase subunit GatY (284 aa).

The active-site Proton donor is the D82. Zn(2+) is bound by residues H83 and H180. G181 is a binding site for dihydroxyacetone phosphate. H208 contacts Zn(2+). Residues 209-211 and 230-233 contribute to the dihydroxyacetone phosphate site; these read GAS and NVAT.

Belongs to the class II fructose-bisphosphate aldolase family. TagBP aldolase GatY subfamily. In terms of assembly, forms a complex with GatZ. Requires Zn(2+) as cofactor.

The enzyme catalyses D-tagatofuranose 1,6-bisphosphate = D-glyceraldehyde 3-phosphate + dihydroxyacetone phosphate. It participates in carbohydrate metabolism; D-tagatose 6-phosphate degradation; D-glyceraldehyde 3-phosphate and glycerone phosphate from D-tagatose 6-phosphate: step 2/2. Its function is as follows. Catalytic subunit of the tagatose-1,6-bisphosphate aldolase GatYZ, which catalyzes the reversible aldol condensation of dihydroxyacetone phosphate (DHAP or glycerone-phosphate) with glyceraldehyde 3-phosphate (G3P) to produce tagatose 1,6-bisphosphate (TBP). Requires GatZ subunit for full activity and stability. Is involved in the catabolism of galactitol. The sequence is that of D-tagatose-1,6-bisphosphate aldolase subunit GatY from Shigella flexneri.